Reading from the N-terminus, the 131-residue chain is Cuticle protein 79, isoform A (131 aa).

A run of 3 repeats spans residues 37-40 (AAPA), 45-48 (AAPA), and 53-56 (AAPA).

In terms of biological role, component of the cuticle of migratory locust which contains more than 100 different structural proteins. The sequence is that of Cuticle protein 79, isoform A from Locusta migratoria (Migratory locust).